The primary structure comprises 1134 residues: ATP-dependent helicase/deoxyribonuclease subunit B (1134 aa).

Position 8–15 (8–15 (GRAGSGKS)) interacts with ATP. Residues cysteine 771, cysteine 1089, cysteine 1092, and cysteine 1098 each contribute to the [4Fe-4S] cluster site.

It belongs to the helicase family. AddB/RexB type 1 subfamily. Heterodimer of AddA and AddB. It depends on Mg(2+) as a cofactor. [4Fe-4S] cluster is required as a cofactor.

The heterodimer acts as both an ATP-dependent DNA helicase and an ATP-dependent, dual-direction single-stranded exonuclease. Recognizes the chi site generating a DNA molecule suitable for the initiation of homologous recombination. The AddB subunit has 5' -&gt; 3' nuclease activity but not helicase activity. This chain is ATP-dependent helicase/deoxyribonuclease subunit B, found in Clostridium novyi (strain NT).